Consider the following 1038-residue polypeptide: MEEPICYDTQKLLDDLSNLKVQEADNERPWSPEKTEIARVKVVKFLRSTQKIPAKHFIQIWEPLHSNICFVYSNTFLAEAAFTAENLPGLLFWRLDLDWTIEEPGNSLKILTQLSSVVQDSETLHRLSANKLRTSSKFGPVSIHFIITDWINMYEVALKDATTAIESPFTHARIGMLESAIAALTQHKFAIIYDMPFVQEGIRVLTQYAGWLLPFNVMWNQIQNSSLTPLTRALFIICMIDEYLTETPVHSISELFADTVNLIKDEAFVSIEEAVTNPRTVHESRISSALAYRDPYVFETSPGMLARRLRLDNGIWESNLLSLSTPGIHIEALLHLLNSDPEAETTSGSNVAEHTRGIWEKVQASTSPSMLISTLAESGFTRFSCKLLRRFIAHHTLAGFIHGSVVADEHITDFQQTLGCLALVGGLAYQLVETYAPTTEYVLTYTRTVNETEKRYETLLPALGLPPGGLGQIMRRCFAPRPLIESIQATRVILLNEISHAEARETTYFKQTHNQSSGALLPQAGQSAVREAVLTWFDLRMDSRWGITPPVDVGMTPPICVDPPATGLEAVMITEALKIAYPTEYNRSSVFVEPSFVPYIIATSTLDALSATIALSFDTRGIQQALSILQWARDYGSGTVPNADGYRTKLSALITILEPFTRTHPPVLLPSHVSTIDSLICELHRTVGIAVDLLPQHVRPLVPDRPSITNSVFLATLYYDELYGRWTRLDKTSQALVENFTSNALVVSRYMLMLQKFFACRFYPTPDLQAVGICNPKVERDEQFGVWRLNDLADAVGHIVGTIQGIRTQMRVGISSLRTIMADASSALRECENLMTKTSTSAIGPLFSTMASRYARFTQDQMDILMRVDKLTTGENIPGLANVEIFLNRWERIATACRHATAVPSAESIATVCNELRRGLKNIQEDRVNAPTSYMSHARNLEDHKAAVSFVMDSRQQFIVDSGPQMGAVLTSQCNIGTWENVNATFLHDNVKITTTVRDVISEAPTLIIGQRWLRPDEILSNVDLRLGVPGNTSGSDP.

The interaction with large tegument protein stretch occupies residues 545 to 1038 (WGITPPVDVG…VPGNTSGSDP (494 aa)).

Belongs to the herpesviridae inner tegument protein family. Interacts (via C-terminus) with the large tegument protein/LTP (via N-terminus).

The protein resides in the virion tegument. The protein localises to the host cytoplasm. Its subcellular location is the host nucleus. It localises to the host Golgi apparatus. It is found in the host trans-Golgi network. In terms of biological role, plays an essential role in cytoplasmic secondary envelopment during viral egress. Interacts with the capsid via the large tegument protein/LTP and participates in its transport to the host trans-Golgi network (TGN) where secondary envelopment occurs. Modulates tegumentation and capsid accumulation at the viral assembly complex. This is Inner tegument protein (21) from Homo sapiens (Human).